Consider the following 267-residue polypeptide: tRNA pseudouridine synthase A (267 aa).

Catalysis depends on aspartate 51, which acts as the Nucleophile. Tyrosine 109 contacts substrate.

It belongs to the tRNA pseudouridine synthase TruA family. In terms of assembly, homodimer.

It catalyses the reaction uridine(38/39/40) in tRNA = pseudouridine(38/39/40) in tRNA. Functionally, formation of pseudouridine at positions 38, 39 and 40 in the anticodon stem and loop of transfer RNAs. In Staphylococcus epidermidis (strain ATCC 12228 / FDA PCI 1200), this protein is tRNA pseudouridine synthase A.